A 200-amino-acid chain; its full sequence is Large ribosomal subunit protein bL25 (200 aa).

This sequence belongs to the bacterial ribosomal protein bL25 family. CTC subfamily. In terms of assembly, part of the 50S ribosomal subunit; part of the 5S rRNA/L5/L18/L25 subcomplex. Contacts the 5S rRNA. Binds to the 5S rRNA independently of L5 and L18.

Its function is as follows. This is one of the proteins that binds to the 5S RNA in the ribosome where it forms part of the central protuberance. The polypeptide is Large ribosomal subunit protein bL25 (Corynebacterium glutamicum (strain ATCC 13032 / DSM 20300 / JCM 1318 / BCRC 11384 / CCUG 27702 / LMG 3730 / NBRC 12168 / NCIMB 10025 / NRRL B-2784 / 534)).